Here is a 193-residue protein sequence, read N- to C-terminus: RNA pyrophosphohydrolase (193 aa).

One can recognise a Nudix hydrolase domain in the interval 6 to 149 (GFRPNVGIIL…KRDVYQRALQ (144 aa)). A Nudix box motif is present at residues 38-59 (GGIKFGETPEQAMFRELEEEVG). The tract at residues 174-193 (THSARKTDEPSTEQTKPNNE) is disordered.

The protein belongs to the Nudix hydrolase family. RppH subfamily. A divalent metal cation is required as a cofactor.

In terms of biological role, accelerates the degradation of transcripts by removing pyrophosphate from the 5'-end of triphosphorylated RNA, leading to a more labile monophosphorylated state that can stimulate subsequent ribonuclease cleavage. This chain is RNA pyrophosphohydrolase, found in Herminiimonas arsenicoxydans.